The primary structure comprises 586 residues: MATPNVNTLWGQTVADELATVGIETAVLAPGSRSTPLAVAFAQHDDIEAVSLLDERSAAFFALGYAKRTGQPAPLVCTSGTALANFHPAVIEADTARVPMVLLTADRPPELADSGANQTIDQADLYGDAVRSYRTLPEPEAAARKLRSLRTTLCRAVGTATGTEPGPVHLNVPFRKPLEPLAAAEPPAGVPDGAVPDGFATENPLAARGRDGPFVEVHSGCTDPSATTVDELATAVEAAASGLIVCGPTDRPAPDAESLVALADATGFSVFADPLSGLRFGPHVDDAPVCGGYDAYLPALEQTPEVVIRFGASPTSKPLRQYLRDADARQFIVDPAGGWREATFTATDLVVADETRLATAVADAVDRTPGSYADRLAELEPGYWRLVEGEEPQEGAMLADAVALAPDPSTVFVSNSMPVRDLDRFGAPQAASLSVLGNRGASGIDGIASTALGAGFGTDDPLVAVTGDLAYYHDMNGLLAVSRAGVDATIVCINNDGGGIFHVLPIEAHESFDKWFRTPHGLDFEPSAALYDIEFARTDSREGFRSLYSEAVGSGETQVIEVQTESGHNHADRTALREAVVEELGR.

The protein belongs to the TPP enzyme family. MenD subfamily. Homodimer. Mg(2+) is required as a cofactor. It depends on Mn(2+) as a cofactor. Requires thiamine diphosphate as cofactor.

The enzyme catalyses isochorismate + 2-oxoglutarate + H(+) = 5-enolpyruvoyl-6-hydroxy-2-succinyl-cyclohex-3-ene-1-carboxylate + CO2. It participates in quinol/quinone metabolism; 1,4-dihydroxy-2-naphthoate biosynthesis; 1,4-dihydroxy-2-naphthoate from chorismate: step 2/7. Its pathway is quinol/quinone metabolism; menaquinone biosynthesis. Catalyzes the thiamine diphosphate-dependent decarboxylation of 2-oxoglutarate and the subsequent addition of the resulting succinic semialdehyde-thiamine pyrophosphate anion to isochorismate to yield 2-succinyl-5-enolpyruvyl-6-hydroxy-3-cyclohexene-1-carboxylate (SEPHCHC). The protein is 2-succinyl-5-enolpyruvyl-6-hydroxy-3-cyclohexene-1-carboxylate synthase of Natronomonas pharaonis (strain ATCC 35678 / DSM 2160 / CIP 103997 / JCM 8858 / NBRC 14720 / NCIMB 2260 / Gabara) (Halobacterium pharaonis).